The chain runs to 218 residues: GEM-like protein 6 (218 aa).

The region spanning 96–174 is the GRAM domain; it reads KIYKRLFKVC…CKINGVNQSQ (79 aa).

The protein belongs to the GEM family.

The sequence is that of GEM-like protein 6 from Arabidopsis thaliana (Mouse-ear cress).